Reading from the N-terminus, the 199-residue chain is FMN-dependent NADH:quinone oxidoreductase 1 (199 aa).

FMN contacts are provided by residues S10, 17–19, and 87–90; these read SNS and MYNF.

This sequence belongs to the azoreductase type 1 family. Homodimer. It depends on FMN as a cofactor.

The catalysed reaction is 2 a quinone + NADH + H(+) = 2 a 1,4-benzosemiquinone + NAD(+). It catalyses the reaction N,N-dimethyl-1,4-phenylenediamine + anthranilate + 2 NAD(+) = 2-(4-dimethylaminophenyl)diazenylbenzoate + 2 NADH + 2 H(+). Quinone reductase that provides resistance to thiol-specific stress caused by electrophilic quinones. Its function is as follows. Also exhibits azoreductase activity. Catalyzes the reductive cleavage of the azo bond in aromatic azo compounds to the corresponding amines. This chain is FMN-dependent NADH:quinone oxidoreductase 1, found in Mesoplasma florum (strain ATCC 33453 / NBRC 100688 / NCTC 11704 / L1) (Acholeplasma florum).